Reading from the N-terminus, the 360-residue chain is GTPase Obg (360 aa).

The region spanning 1–156 (MFVDSVEIII…KCVRLELKLI (156 aa)) is the Obg domain. Residues 157–360 (ADIGLVGFPN…LKFVLLEALP (204 aa)) form the OBG-type G domain. Residues 163–170 (GFPNAGKS), 188–192 (FTTLV), 210–213 (DIPG), 279–282 (NKCD), and 341–343 (SAL) contribute to the GTP site. Ser-170 and Thr-190 together coordinate Mg(2+).

The protein belongs to the TRAFAC class OBG-HflX-like GTPase superfamily. OBG GTPase family. In terms of assembly, monomer. The cofactor is Mg(2+).

It localises to the cytoplasm. Functionally, an essential GTPase which binds GTP, GDP and possibly (p)ppGpp with moderate affinity, with high nucleotide exchange rates and a fairly low GTP hydrolysis rate. Plays a role in control of the cell cycle, stress response, ribosome biogenesis and in those bacteria that undergo differentiation, in morphogenesis control. The protein is GTPase Obg of Helicobacter pylori (strain Shi470).